A 196-amino-acid chain; its full sequence is Leucyl/phenylalanyl-tRNA--protein transferase (196 aa).

Belongs to the L/F-transferase family.

Its subcellular location is the cytoplasm. The catalysed reaction is N-terminal L-lysyl-[protein] + L-leucyl-tRNA(Leu) = N-terminal L-leucyl-L-lysyl-[protein] + tRNA(Leu) + H(+). It catalyses the reaction N-terminal L-arginyl-[protein] + L-leucyl-tRNA(Leu) = N-terminal L-leucyl-L-arginyl-[protein] + tRNA(Leu) + H(+). The enzyme catalyses L-phenylalanyl-tRNA(Phe) + an N-terminal L-alpha-aminoacyl-[protein] = an N-terminal L-phenylalanyl-L-alpha-aminoacyl-[protein] + tRNA(Phe). Functions in the N-end rule pathway of protein degradation where it conjugates Leu, Phe and, less efficiently, Met from aminoacyl-tRNAs to the N-termini of proteins containing an N-terminal arginine or lysine. The sequence is that of Leucyl/phenylalanyl-tRNA--protein transferase from Thermosynechococcus vestitus (strain NIES-2133 / IAM M-273 / BP-1).